A 182-amino-acid polypeptide reads, in one-letter code: Large ribosomal subunit protein bL25 (182 aa).

Belongs to the bacterial ribosomal protein bL25 family. CTC subfamily. As to quaternary structure, part of the 50S ribosomal subunit; part of the 5S rRNA/L5/L18/L25 subcomplex. Contacts the 5S rRNA. Binds to the 5S rRNA independently of L5 and L18.

This is one of the proteins that binds to the 5S RNA in the ribosome where it forms part of the central protuberance. The sequence is that of Large ribosomal subunit protein bL25 from Borreliella burgdorferi (strain ZS7) (Borrelia burgdorferi).